The sequence spans 623 residues: NADPH-dependent diflavin oxidoreductase 1 (623 aa).

One can recognise a Flavodoxin-like domain in the interval 8–153 (LLVLYASQTG…TLDPWMLSLW (146 aa)). FMN is bound by residues 14–19 (SQTGNA), 62–65 (STTG), and D135. In terms of domain architecture, FAD-binding FR-type spans 221–467 (KPDCFLKMTR…SLPAPSQSLP (247 aa)). FAD is bound by residues R369, 399–402 (RAFS), and 433–436 (GLCS). Residues T475, 541–542 (SR), 547–551 (KVYVQ), and D583 each bind NADP(+). Position 622 (W622) interacts with FAD.

The protein belongs to the NADPH-dependent diflavin oxidoreductase NDOR1 family. In the N-terminal section; belongs to the flavodoxin family. It in the C-terminal section; belongs to the flavoprotein pyridine nucleotide cytochrome reductase family. Interacts with At5g18400. The cofactor is FAD. FMN is required as a cofactor. In terms of tissue distribution, widely expressed.

It is found in the cytoplasm. Its subcellular location is the nucleus. The enzyme catalyses 2 oxidized [2Fe-2S]-[protein] + NADPH = 2 reduced [2Fe-2S]-[protein] + NADP(+) + H(+). Functionally, NADPH-dependent reductase which is a central component of the cytosolic iron-sulfur (Fe-S) protein assembly (CIA) machinery. Transfers electrons from NADPH via its FAD and FMN prosthetic groups to the [2Fe-2S] cluster of the anamorsin/DRE2 homolog, another key component of the CIA machinery. In turn, this reduced cluster provides electrons for assembly of cytosolic iron-sulfur cluster proteins. Catalyzes the NADP-dependent reduction of cytochrome c, but not cytochrome P450 in vitro. Required for embryo development. This Arabidopsis thaliana (Mouse-ear cress) protein is NADPH-dependent diflavin oxidoreductase 1 (ATR3).